We begin with the raw amino-acid sequence, 776 residues long: Disintegrin and metalloproteinase domain-containing protein 7 (776 aa).

Positions 1-23 (MLPGCIFLMILLILQVKEKVILG) are cleaved as a signal peptide. Positions 24–176 (VEGQQLVYPK…NYSCTELNFT (153 aa)) are excised as a propeptide. The Extracellular portion of the chain corresponds to 26 to 669 (GQQLVYPKKL…WEETLNVTNV (644 aa)). N-linked (GlcNAc...) asparagine glycosylation is found at asparagine 84, asparagine 167, and asparagine 174. In terms of domain architecture, Peptidase M12B spans 199 to 394 (KYIELFIVAD…YKPTCMLNIP (196 aa)). 4 cysteine pairs are disulfide-bonded: cysteine 310–cysteine 389, cysteine 350–cysteine 373, cysteine 352–cysteine 357, and cysteine 460–cysteine 480. One can recognise a Disintegrin domain in the interval 402-488 (FQFCGNKKLD…ACPKDQFRVN (87 aa)). Residues asparagine 584, asparagine 629, and asparagine 665 are each glycosylated (N-linked (GlcNAc...) asparagine). The helical transmembrane segment at 670 to 690 (AILIVVLVLVIVGIGVLILLI) threads the bilayer. Residues 691 to 776 (RYQKCIKLKQ…GIADPNQSAK (86 aa)) are Cytoplasmic-facing. The segment at 757 to 776 (TLKPASKDSRGIADPNQSAK) is disordered.

As to quaternary structure, interacts with ITM2B in sperm; the interaction increases following capacitation. Interacts with HSPA5 and CANX.

It localises to the membrane. Functionally, required for normal male fertility via maintenance of epithelial cell morphology in the caput epididymis and subsequently correct epididymis lumen structure required for sperm development. Plays a role in sperm motility, flagella morphology and tyrosine phosphorylation during sperm capacitance. Plays a role in normal expression levels of HSPA5, ITM2B and ADAM2 in sperm both prior to and post-capacitation. This is a non catalytic metalloprotease-like protein. This is Disintegrin and metalloproteinase domain-containing protein 7 (ADAM7) from Macaca fascicularis (Crab-eating macaque).